A 346-amino-acid chain; its full sequence is SUMO-activating enzyme subunit 1 (346 aa).

The residue at position 1 (M1) is an N-acetylmethionine. Residue V2 is modified to N-acetylvaline; in SUMO-activating enzyme subunit 1, N-terminally processed. S12 is modified (phosphoserine). Residue K198 is modified to N6-acetyllysine.

This sequence belongs to the ubiquitin-activating E1 family. As to quaternary structure, heterodimer of SAE1 and UBA2/SAE2. The heterodimer corresponds to the two domains that are encoded on a single polypeptide chain in ubiquitin-activating enzyme E1. Interacts with UBE2I.

It is found in the nucleus. Its pathway is protein modification; protein sumoylation. Its function is as follows. The heterodimer acts as an E1 ligase for SUMO1, SUMO2, SUMO3, and probably SUMO4. It mediates ATP-dependent activation of SUMO proteins followed by formation of a thioester bond between a SUMO protein and a conserved active site cysteine residue on UBA2/SAE2. This Bos taurus (Bovine) protein is SUMO-activating enzyme subunit 1 (SAE1).